The chain runs to 101 residues: HssA/B-like protein 40 (101 aa).

Residues 1–26 are disordered; it reads MTLFSSISSMSTSMSGSKSSISSFGS.

The protein belongs to the hssA/B family.

The sequence is that of HssA/B-like protein 40 (hssl40) from Dictyostelium discoideum (Social amoeba).